Consider the following 390-residue polypeptide: Probable splicing factor YJU2B (390 aa).

Residues 354-390 (DACKASSSSEEENSIDSCATGKSLVADYSDSDSGSEV) form a disordered region.

This sequence belongs to the CWC16 family.

Its subcellular location is the nucleus. In terms of biological role, may be involved in mRNA splicing. This is Probable splicing factor YJU2B (yju2b) from Danio rerio (Zebrafish).